Here is a 205-residue protein sequence, read N- to C-terminus: GTP cyclohydrolase-2 (205 aa).

49–53 is a GTP binding site; sequence RLHSE. Cysteine 54, cysteine 65, and cysteine 67 together coordinate Zn(2+). Residues glutamine 70, 92–94, and threonine 114 contribute to the GTP site; that span reads EGR. The Proton acceptor role is filled by aspartate 126. The Nucleophile role is filled by arginine 128. The GTP site is built by threonine 149 and lysine 154.

Belongs to the GTP cyclohydrolase II family. The cofactor is Zn(2+).

The catalysed reaction is GTP + 4 H2O = 2,5-diamino-6-hydroxy-4-(5-phosphoribosylamino)-pyrimidine + formate + 2 phosphate + 3 H(+). Its pathway is cofactor biosynthesis; riboflavin biosynthesis; 5-amino-6-(D-ribitylamino)uracil from GTP: step 1/4. Functionally, catalyzes the conversion of GTP to 2,5-diamino-6-ribosylamino-4(3H)-pyrimidinone 5'-phosphate (DARP), formate and pyrophosphate. This Pseudomonas putida (strain ATCC 700007 / DSM 6899 / JCM 31910 / BCRC 17059 / LMG 24140 / F1) protein is GTP cyclohydrolase-2.